A 541-amino-acid polypeptide reads, in one-letter code: Glucose-6-phosphate isomerase (541 aa).

The active-site Proton donor is the Glu346. Residues His377 and Lys506 contribute to the active site.

The protein belongs to the GPI family.

It localises to the cytoplasm. It catalyses the reaction alpha-D-glucose 6-phosphate = beta-D-fructose 6-phosphate. Its pathway is carbohydrate biosynthesis; gluconeogenesis. The protein operates within carbohydrate degradation; glycolysis; D-glyceraldehyde 3-phosphate and glycerone phosphate from D-glucose: step 2/4. Functionally, catalyzes the reversible isomerization of glucose-6-phosphate to fructose-6-phosphate. The sequence is that of Glucose-6-phosphate isomerase from Rhizobium etli (strain ATCC 51251 / DSM 11541 / JCM 21823 / NBRC 15573 / CFN 42).